Consider the following 601-residue polypeptide: ATP-dependent RNA helicase DeaD (601 aa).

The Q motif signature appears at 6–34 (STFSFLGLNPFIIKSLSKMGYVKPSPIQA). In terms of domain architecture, Helicase ATP-binding spans 37-208 (IPLLLEGRDV…KRFMKNPQEI (172 aa)). Residue 50 to 57 (AQTGSGKT) participates in ATP binding. The short motif at 156–159 (DEAD) is the DEAD box element. In terms of domain architecture, Helicase C-terminal spans 231–378 (KTDALIRFLE…EVQLPKIEVL (148 aa)). Positions 564–581 (SIFNKDKNNKRRFSDNRL) are enriched in basic and acidic residues. The disordered stretch occupies residues 564-601 (SIFNKDKNNKRRFSDNRLNKSSSIKNETKSSFFRRKSV). Polar residues predominate over residues 582–594 (NKSSSIKNETKSS).

It belongs to the DEAD box helicase family. DeaD/CsdA subfamily.

It is found in the cytoplasm. It carries out the reaction ATP + H2O = ADP + phosphate + H(+). Its function is as follows. DEAD-box RNA helicase involved in various cellular processes at low temperature, including ribosome biogenesis, mRNA degradation and translation initiation. The protein is ATP-dependent RNA helicase DeaD of Buchnera aphidicola subsp. Schizaphis graminum (strain Sg).